The following is a 90-amino-acid chain: Small ribosomal subunit protein uS15 (90 aa).

It belongs to the universal ribosomal protein uS15 family. Part of the 30S ribosomal subunit. Forms a bridge to the 50S subunit in the 70S ribosome, contacting the 23S rRNA.

Functionally, one of the primary rRNA binding proteins, it binds directly to 16S rRNA where it helps nucleate assembly of the platform of the 30S subunit by binding and bridging several RNA helices of the 16S rRNA. Its function is as follows. Forms an intersubunit bridge (bridge B4) with the 23S rRNA of the 50S subunit in the ribosome. The chain is Small ribosomal subunit protein uS15 from Thermotoga maritima (strain ATCC 43589 / DSM 3109 / JCM 10099 / NBRC 100826 / MSB8).